Reading from the N-terminus, the 482-residue chain is Membrane-bound lytic murein transglycosylase F (482 aa).

The signal sequence occupies residues Met1–Ala18. The tract at residues Ile19 to Leu266 is non-LT domain. The segment at Asn267–Arg482 is LT domain. Residue Glu311 is part of the active site.

It in the N-terminal section; belongs to the bacterial solute-binding protein 3 family. In the C-terminal section; belongs to the transglycosylase Slt family.

The protein localises to the cell outer membrane. It carries out the reaction Exolytic cleavage of the (1-&gt;4)-beta-glycosidic linkage between N-acetylmuramic acid (MurNAc) and N-acetylglucosamine (GlcNAc) residues in peptidoglycan, from either the reducing or the non-reducing ends of the peptidoglycan chains, with concomitant formation of a 1,6-anhydrobond in the MurNAc residue.. In terms of biological role, murein-degrading enzyme that degrades murein glycan strands and insoluble, high-molecular weight murein sacculi, with the concomitant formation of a 1,6-anhydromuramoyl product. Lytic transglycosylases (LTs) play an integral role in the metabolism of the peptidoglycan (PG) sacculus. Their lytic action creates space within the PG sacculus to allow for its expansion as well as for the insertion of various structures such as secretion systems and flagella. The sequence is that of Membrane-bound lytic murein transglycosylase F from Histophilus somni (strain 129Pt) (Haemophilus somnus).